The chain runs to 460 residues: Endoglucanase C (460 aa).

The N-terminal stretch at 1–32 (MIKGSSLKRFKSLVMAAIFSVSIISTAIASSA) is a signal peptide. E99 serves as the catalytic Proton donor. Residue D155 is the Nucleophile of the active site. The region spanning 400–460 (KPDLKGDVNN…FAQLKVKLLN (61 aa)) is the Dockerin domain.

This sequence belongs to the glycosyl hydrolase 8 (cellulase D) family. In terms of assembly, monomer. Post-translationally, there are two forms of the cellulase. The shorter form lacks probably the C-terminal reiterated domains.

It carries out the reaction Endohydrolysis of (1-&gt;4)-beta-D-glucosidic linkages in cellulose, lichenin and cereal beta-D-glucans.. It participates in glycan metabolism; cellulose degradation. In terms of biological role, the biological conversion of cellulose to glucose generally requires three types of hydrolytic enzymes: (1) Endoglucanases which cut internal beta-1,4-glucosidic bonds; (2) Exocellobiohydrolases that cut the disaccharide cellobiose from the non-reducing end of the cellulose polymer chain; (3) Beta-1,4-glucosidases which hydrolyze the cellobiose and other short cello-oligosaccharides to glucose. This is Endoglucanase C (celCCC) from Ruminiclostridium cellulolyticum (strain ATCC 35319 / DSM 5812 / JCM 6584 / H10) (Clostridium cellulolyticum).